Reading from the N-terminus, the 476-residue chain is FAD-dependent monooxygenase ausM (476 aa).

3 residues coordinate FAD: Glu41, Gly55, and Arg114. Residue Tyr222 is part of the active site. FAD-binding residues include Asp314 and Ala327. Residues 447–467 (LGSTPIHMLTLLLPCLFYFMY) form a helical membrane-spanning segment.

This sequence belongs to the paxM FAD-dependent monooxygenase family. The cofactor is FAD.

Its subcellular location is the membrane. Its pathway is secondary metabolite biosynthesis; terpenoid biosynthesis. Its function is as follows. FAD-dependent monooxygenase; part of the gene cluster A that mediates the biosynthesis of the fungal meroterpenoid acetoxydehydroaustin. The first step of the pathway is the synthesis of 3,5-dimethylorsellinic acid by the polyketide synthase ausA. 3,5-dimethylorsellinic acid is then prenylated by the polyprenyl transferase ausN. Further epoxidation by the FAD-dependent monooxygenase ausM and cyclization by the probable terpene cyclase ausL lead to the formation of protoaustinoid A. Protoaustinoid A is then oxidized to spiro-lactone preaustinoid A3 by the combined action of the FAD-binding monooxygenases ausB and ausC, and the dioxygenase ausE. Acid-catalyzed keto-rearrangement and ring contraction of the tetraketide portion of preaustinoid A3 by ausJ lead to the formation of preaustinoid A4. The aldo-keto reductase ausK, with the help of ausH, is involved in the next step by transforming preaustinoid A4 into isoaustinone which is in turn hydroxylated by the P450 monooxygenase ausI to form austinolide. The cytochrome P450 monooxygenase ausG then modifies austinolide to austinol. Austinol is further acetylated to austin by the O-acetyltransferase ausP, which spontaneously changes to dehydroaustin. The cytochrome P450 monooxygenase then converts dehydroaustin is into 7-dehydrodehydroaustin. The hydroxylation catalyzed by ausR permits the second O-acetyltransferase ausQ to add an additional acetyl group to the molecule, leading to the formation of acetoxydehydroaustin. Due to genetic rearrangements of the clusters and the subsequent loss of some enzymes, the end product of the Penicillium brasilianum austinoid biosynthesis clusters is acetoxydehydroaustin. The polypeptide is FAD-dependent monooxygenase ausM (Penicillium brasilianum).